Consider the following 674-residue polypeptide: Growth arrest-specific protein 6 (674 aa).

An N-terminal signal peptide occupies residues 1–27; it reads MPPPPGPAAALGTALLLLLLASESSHT. Positions 50–91 constitute a Gla domain; sequence FEEAKQGHLERECVEEVCSKEEAREVFENDPETEYFYPRYQE. Cysteines 62 and 67 form a disulfide. Serine 68 carries the post-translational modification Phosphoserine. Positions 113 to 151 constitute an EGF-like 1; calcium-binding domain; that stretch reads LPDQCTPNPCDKKGTHICQDLMGNFFCVCTDGWGGRLCD. 14 disulfide bridges follow: cysteine 117-cysteine 130, cysteine 122-cysteine 139, cysteine 141-cysteine 150, cysteine 157-cysteine 168, cysteine 164-cysteine 177, cysteine 179-cysteine 192, cysteine 198-cysteine 209, cysteine 204-cysteine 218, cysteine 220-cysteine 233, cysteine 239-cysteine 248, cysteine 244-cysteine 257, cysteine 259-cysteine 274, cysteine 280-cysteine 566, and cysteine 441-cysteine 467. Residues 153 to 193 form the EGF-like 2; calcium-binding domain; sequence DVNECVQKNGGCSQVCHNKPGSFQCACHSGFSLASDGQTCQ. Positions 194–234 constitute an EGF-like 3; calcium-binding domain; it reads DIDECTDSDTCGDARCKNLPGSYSCLCDEGYTYSSKEKTCQ. In terms of domain architecture, EGF-like 4; calcium-binding spans 235–275; sequence DVDECQQDRCEQTCVNSPGSYTCHCDGRGGLKLSPDMDTCE. Laminin G-like domains lie at 295–467 and 474–666; these read GRMF…KMQC and GSFF…SHSC. Positions 326 and 328 each coordinate Ca(2+). Residue asparagine 417 is glycosylated (N-linked (GlcNAc...) asparagine). Residue arginine 437 coordinates Ca(2+). Residue asparagine 488 is glycosylated (N-linked (GlcNAc...) asparagine). Residue threonine 609 is modified to Phosphothreonine. A Phosphoserine modification is found at serine 614. Phosphothreonine occurs at positions 617 and 633. A Phosphotyrosine modification is found at tyrosine 636. A disulfide bond links cysteine 639 and cysteine 666. Aspartate 652 is a binding site for Ca(2+).

As to quaternary structure, heterodimer and heterotetramer with AXL. In terms of processing, gamma-carboxyglutamate residues are formed by vitamin K dependent carboxylation. These residues are essential for the binding of calcium.

The protein localises to the secreted. In terms of biological role, ligand for tyrosine-protein kinase receptors AXL, TYRO3 and MER whose signaling is implicated in cell growth and survival, cell adhesion and cell migration. GAS6/AXL signaling plays a role in various processes such as endothelial cell survival during acidification by preventing apoptosis, optimal cytokine signaling during human natural killer cell development, hepatic regeneration, gonadotropin-releasing hormone neuron survival and migration, platelet activation, or regulation of thrombotic responses. This chain is Growth arrest-specific protein 6 (Gas6), found in Mus musculus (Mouse).